The primary structure comprises 424 residues: Light-independent protochlorophyllide reductase subunit N (424 aa).

The [4Fe-4S] cluster site is built by Cys16, Cys41, and Cys102.

The protein belongs to the BchN/ChlN family. In terms of assembly, protochlorophyllide reductase is composed of three subunits; ChlL, ChlN and ChlB. Forms a heterotetramer of two ChlB and two ChlN subunits. [4Fe-4S] cluster is required as a cofactor.

The catalysed reaction is chlorophyllide a + oxidized 2[4Fe-4S]-[ferredoxin] + 2 ADP + 2 phosphate = protochlorophyllide a + reduced 2[4Fe-4S]-[ferredoxin] + 2 ATP + 2 H2O. It participates in porphyrin-containing compound metabolism; chlorophyll biosynthesis (light-independent). Functionally, component of the dark-operative protochlorophyllide reductase (DPOR) that uses Mg-ATP and reduced ferredoxin to reduce ring D of protochlorophyllide (Pchlide) to form chlorophyllide a (Chlide). This reaction is light-independent. The NB-protein (ChlN-ChlB) is the catalytic component of the complex. This is Light-independent protochlorophyllide reductase subunit N from Synechococcus sp. (strain WH7803).